Reading from the N-terminus, the 1635-residue chain is Cortactin-binding protein 2 (1635 aa).

4 disordered regions span residues 1-20, 193-219, 264-469, and 483-582; these read MATA…ARTS, ASKL…KSSQ, EQLR…DNLV, and SRFT…PHGI. The stretch at 116–273 forms a coiled coil; sequence RKMQERMSAQ…EQLRKGNDHK (158 aa). Basic and acidic residues-rich tracts occupy residues 193 to 205 and 264 to 274; these read ASKL…KTGE and EQLRKGNDHKP. 2 stretches are compositionally biased toward low complexity: residues 320 to 331 and 375 to 395; these read PPVAVPAKPSSA and GPSS…LLNN. Polar residues predominate over residues 402–414; the sequence is SQNHSLTSSTPNL. The segment covering 439–453 has biased composition (low complexity); sequence QGNANDQDQNGNTTQ. Residues 454–466 are compositionally biased toward polar residues; sequence SPPSREVSPTSRD. Arginine 484 carries the asymmetric dimethylarginine modification. 6 ANK repeats span residues 697 to 727, 731 to 760, 764 to 793, 797 to 826, 830 to 859, and 893 to 923; these read GRPT…DINH, DGSS…QVDD, NGFT…DINH, GGQT…DRSI, DGWT…PESE, and EGWT…EAER. Residues 856-876 are disordered; sequence PESENSGSKDQTGLGSREESR. Polar residues predominate over residues 858–869; it reads SENSGSKDQTGL. The segment at 1420–1469 is disordered; that stretch reads SHRKKGESGSWRKVNTSPRKKSGLSSSQTWTKQEATKDGVRNDTGHQNGN. The span at 1432–1452 shows a compositional bias: polar residues; sequence KVNTSPRKKSGLSSSQTWTKQ. Residues 1453–1463 show a composition bias toward basic and acidic residues; that stretch reads EATKDGVRNDT. Phosphoserine is present on serine 1498. Residues 1531 to 1624 form a disordered region; sequence RMFGSSRTDP…RQREINNNLK (94 aa). Polar residues-rich tracts occupy residues 1546–1555 and 1563–1577; these read PTMSDRSLPS and LSSN…NTPK. Basic and acidic residues predominate over residues 1615–1624; that stretch reads RQREINNNLK.

As to quaternary structure, interacts with CTTN/cortactin SH3 domain. Interacts with STRN, STRN4/zinedin and MOB4/phocein; this interactions mediate the association with the STRIPAK core complex and may regulate dendritic spine distribution of the STRIPAK complex in hippocampal neurons. Activation of glutamate receptors weakens the interaction with STRN and STRN4.

The protein resides in the cytoplasm. It is found in the cell cortex. The protein localises to the cell projection. Its subcellular location is the dendritic spine. In terms of biological role, regulates the dendritic spine distribution of CTTN/cortactin in hippocampal neurons, and thus controls dendritic spinogenesis and dendritic spine maintenance. Associates with the striatin-interacting phosphatase and kinase (STRIPAK) core complex to regulate dendritic spine distribution of the STRIPAK complex in hippocampal neurons. The chain is Cortactin-binding protein 2 (CTTNBP2) from Ornithorhynchus anatinus (Duckbill platypus).